A 310-amino-acid polypeptide reads, in one-letter code: Calbindin-32 (310 aa).

EF-hand domains follow at residues 35-70 (LSAN…FVSS), 84-120 (TMLE…EENF), 131-166 (ESSV…LLKE), 177-212 (KLIE…KENF), 224-259 (LTKE…LLEL), and 283-304 (TDKH…LAKI). Residues Asp-48, Asp-50, Asn-52, Tyr-54, Glu-59, Asp-98, Asn-100, Asp-102, Lys-104, Glu-109, Asp-144, Asp-146, Ser-148, Tyr-150, Glu-155, Asp-190, Asn-192, Asp-194, Arg-196, Glu-201, Asp-237, Asp-239, Ser-241, Thr-243, and Glu-248 each coordinate Ca(2+).

It belongs to the calbindin family. In terms of tissue distribution, expressed in a large number of neuron of the brain and the thoracic ganglion as well as in two small muscles of the thorax.

This chain is Calbindin-32 (Cbp53E), found in Drosophila melanogaster (Fruit fly).